A 273-amino-acid chain; its full sequence is tRNA pseudouridine synthase B (273 aa).

Aspartate 38 functions as the Nucleophile in the catalytic mechanism.

Belongs to the pseudouridine synthase TruB family. Type 1 subfamily.

It carries out the reaction uridine(55) in tRNA = pseudouridine(55) in tRNA. Its function is as follows. Responsible for synthesis of pseudouridine from uracil-55 in the psi GC loop of transfer RNAs. The sequence is that of tRNA pseudouridine synthase B from Campylobacter curvus (strain 525.92).